The primary structure comprises 472 residues: Aspartyl/glutamyl-tRNA(Asn/Gln) amidotransferase subunit B (472 aa).

This sequence belongs to the GatB/GatE family. GatB subfamily. Heterotrimer of A, B and C subunits.

It catalyses the reaction L-glutamyl-tRNA(Gln) + L-glutamine + ATP + H2O = L-glutaminyl-tRNA(Gln) + L-glutamate + ADP + phosphate + H(+). The enzyme catalyses L-aspartyl-tRNA(Asn) + L-glutamine + ATP + H2O = L-asparaginyl-tRNA(Asn) + L-glutamate + ADP + phosphate + 2 H(+). Its function is as follows. Allows the formation of correctly charged Asn-tRNA(Asn) or Gln-tRNA(Gln) through the transamidation of misacylated Asp-tRNA(Asn) or Glu-tRNA(Gln) in organisms which lack either or both of asparaginyl-tRNA or glutaminyl-tRNA synthetases. The reaction takes place in the presence of glutamine and ATP through an activated phospho-Asp-tRNA(Asn) or phospho-Glu-tRNA(Gln). The chain is Aspartyl/glutamyl-tRNA(Asn/Gln) amidotransferase subunit B from Sulfolobus acidocaldarius (strain ATCC 33909 / DSM 639 / JCM 8929 / NBRC 15157 / NCIMB 11770).